Reading from the N-terminus, the 309-residue chain is Foldase protein PrsA (309 aa).

A signal peptide spans 1–22 (MKTRSKLAAGFLTLMSVATLAA). Cysteine 23 is lipidated: N-palmitoyl cysteine. The S-diacylglycerol cysteine moiety is linked to residue cysteine 23. A PpiC domain is found at 146 to 241 (TPETSVQVIK…TSYYIIKVTD (96 aa)).

This sequence belongs to the PrsA family.

Its subcellular location is the cell membrane. It catalyses the reaction [protein]-peptidylproline (omega=180) = [protein]-peptidylproline (omega=0). In terms of biological role, plays a major role in protein secretion by helping the post-translocational extracellular folding of several secreted proteins. This chain is Foldase protein PrsA, found in Streptococcus agalactiae serotype Ia (strain ATCC 27591 / A909 / CDC SS700).